The following is a 509-amino-acid chain: Steroid 17-alpha-hydroxylase/17,20 lyase (509 aa).

Asn-202 serves as a coordination point for substrate. Cys-442 is a heme binding site.

It belongs to the cytochrome P450 family. It depends on heme as a cofactor.

It is found in the endoplasmic reticulum membrane. The protein localises to the microsome membrane. The catalysed reaction is a C21-steroid + reduced [NADPH--hemoprotein reductase] + O2 = a 17alpha-hydroxy-C21-steroid + oxidized [NADPH--hemoprotein reductase] + H2O + H(+). It carries out the reaction progesterone + reduced [NADPH--hemoprotein reductase] + O2 = 17alpha-hydroxyprogesterone + oxidized [NADPH--hemoprotein reductase] + H2O + H(+). It catalyses the reaction pregnenolone + reduced [NADPH--hemoprotein reductase] + O2 = 17alpha-hydroxypregnenolone + oxidized [NADPH--hemoprotein reductase] + H2O + H(+). The enzyme catalyses 17alpha-hydroxyprogesterone + reduced [NADPH--hemoprotein reductase] + O2 = androst-4-ene-3,17-dione + acetate + oxidized [NADPH--hemoprotein reductase] + H2O + 2 H(+). The catalysed reaction is 17alpha-hydroxyprogesterone + reduced [NADPH--hemoprotein reductase] + O2 = 16alpha,17alpha-dihydroxyprogesterone + oxidized [NADPH--hemoprotein reductase] + H2O + H(+). It carries out the reaction 16alpha,17alpha-dihydroxyprogesterone + reduced [NADPH--hemoprotein reductase] + O2 = 6beta,16alpha,17alpha-trihydroxyprogesterone + oxidized [NADPH--hemoprotein reductase] + H2O + H(+). It catalyses the reaction 17alpha-hydroxypregnenolone + reduced [NADPH--hemoprotein reductase] + O2 = 3beta-hydroxyandrost-5-en-17-one + acetate + oxidized [NADPH--hemoprotein reductase] + H2O + 2 H(+). The enzyme catalyses 16alpha,17alpha-dihydroxypregnenolone + reduced [NADPH--hemoprotein reductase] + O2 = 3beta,16alpha-dihydroxy-androst-5-en-17-one + acetate + oxidized [NADPH--hemoprotein reductase] + H2O + 2 H(+). The catalysed reaction is 3beta-hydroxyandrost-5-en-17-one + reduced [NADPH--hemoprotein reductase] + O2 = 3beta,16alpha-dihydroxy-androst-5-en-17-one + oxidized [NADPH--hemoprotein reductase] + H2O + H(+). It carries out the reaction androst-4-ene-3,17-dione + reduced [NADPH--hemoprotein reductase] + O2 = 16alpha-hydroxyandrost-4-ene-3,17-dione + oxidized [NADPH--hemoprotein reductase] + H2O + H(+). It participates in steroid hormone biosynthesis. Its pathway is steroid biosynthesis; glucocorticoid biosynthesis. Its activity is regulated as follows. Regulated predominantly by intracellular cAMP levels. The 17,20-lyase activity is stimulated by cytochrome b5, which acts as an allosteric effector increasing the Vmax of the lyase activity. Functionally, a cytochrome P450 monooxygenase involved in corticoid and androgen biosynthesis. Catalyzes 17-alpha hydroxylation of C21 steroids, which is common for both pathways. A second oxidative step, required only for androgen synthesis, involves an acyl-carbon cleavage. The 17-alpha hydroxy intermediates, as part of adrenal glucocorticoids biosynthesis pathway, are precursors of cortisol. Hydroxylates steroid hormones, pregnenolone and progesterone to form 17-alpha hydroxy metabolites, followed by the cleavage of the C17-C20 bond to form C19 steroids, dehydroepiandrosterone (DHEA) and androstenedione. Has 16-alpha hydroxylase activity. Catalyzes 16-alpha hydroxylation of 17-alpha hydroxy pregnenolone, followed by the cleavage of the C17-C20 bond to form 16-alpha-hydroxy DHEA. Also 16-alpha hydroxylates androgens, relevant for estriol synthesis. Mechanistically, uses molecular oxygen inserting one oxygen atom into a substrate, and reducing the second into a water molecule, with two electrons provided by NADPH via cytochrome P450 reductase (CPR; NADPH-ferrihemoprotein reductase). The protein is Steroid 17-alpha-hydroxylase/17,20 lyase (CYP17A1) of Ovis aries (Sheep).